We begin with the raw amino-acid sequence, 226 residues long: Peroxiredoxin-like 2C (226 aa).

The interval 1-24 is disordered; sequence MAAPVTRQVSGCAGRVPSPAGSVT.

The protein belongs to the peroxiredoxin-like PRXL2 family. PRXL2C subfamily.

Functionally, may positively regulate ERK1/2 signaling and AKT1 activation leading to HIF1A up-regulation with an increased expression of glycolysis genes and enhanced glycolysis. In Mus musculus (Mouse), this protein is Peroxiredoxin-like 2C (Prxl2c).